Reading from the N-terminus, the 695-residue chain is Elongation factor G (695 aa).

The region spanning 10–285 (AKTRNIGIMA…AVIDYLPSPI (276 aa)) is the tr-type G domain. Residues 19-26 (AHIDAGKT), 83-87 (DTPGH), and 137-140 (NKMD) each bind GTP.

Belongs to the TRAFAC class translation factor GTPase superfamily. Classic translation factor GTPase family. EF-G/EF-2 subfamily.

The protein localises to the cytoplasm. Catalyzes the GTP-dependent ribosomal translocation step during translation elongation. During this step, the ribosome changes from the pre-translocational (PRE) to the post-translocational (POST) state as the newly formed A-site-bound peptidyl-tRNA and P-site-bound deacylated tRNA move to the P and E sites, respectively. Catalyzes the coordinated movement of the two tRNA molecules, the mRNA and conformational changes in the ribosome. This Limosilactobacillus reuteri (strain DSM 20016) (Lactobacillus reuteri) protein is Elongation factor G.